The primary structure comprises 269 residues: Malonyl-[acyl-carrier protein] O-methyltransferase (269 aa).

It belongs to the methyltransferase superfamily.

It catalyses the reaction malonyl-[ACP] + S-adenosyl-L-methionine = malonyl-[ACP] methyl ester + S-adenosyl-L-homocysteine. Its pathway is cofactor biosynthesis; biotin biosynthesis. Converts the free carboxyl group of a malonyl-thioester to its methyl ester by transfer of a methyl group from S-adenosyl-L-methionine (SAM). It allows to synthesize pimeloyl-ACP via the fatty acid synthetic pathway. The polypeptide is Malonyl-[acyl-carrier protein] O-methyltransferase (Bacillus cereus (strain ATCC 14579 / DSM 31 / CCUG 7414 / JCM 2152 / NBRC 15305 / NCIMB 9373 / NCTC 2599 / NRRL B-3711)).